The chain runs to 1412 residues: Cardiac-enriched FHL2-interacting protein (1412 aa).

Disordered stretches follow at residues Val106 to Ala177, Val202 to Pro443, Leu460 to Pro500, Tyr517 to His848, Ser877 to Thr923, Glu935 to Thr1255, and Arg1344 to Ser1412. Thr120 is subject to Phosphothreonine. Low complexity predominate over residues Ser135–Ser145. Residues Arg161–Lys171 show a composition bias toward pro residues. Residues Val202–Ser212 are compositionally biased toward polar residues. Basic and acidic residues-rich tracts occupy residues Trp285 to Ala299 and Lys306 to Leu316. Position 328 is a phosphoserine (Ser328). Over residues Ser343 to Gly352 the composition is skewed to polar residues. Positions Lys378–Thr389 are enriched in basic residues. Residue Ser473 is modified to Phosphoserine. Composition is skewed to basic and acidic residues over residues Gln482–Lys496 and Gly525–Gln538. Residues Ser587–Asn612 show a composition bias toward low complexity. Positions Gly632–Pro641 are enriched in basic and acidic residues. Polar residues-rich tracts occupy residues Asn670–Glu679, Gly687–Phe697, and Ser712–Arg722. Positions Phe728 to Glu741 are enriched in low complexity. Positions Gln753–Arg799 are enriched in basic and acidic residues. Residue Ser813 is modified to Phosphoserine. Residues Ala826–Asp837 are compositionally biased toward basic and acidic residues. 3 stretches are compositionally biased toward polar residues: residues Ala904–Pro921, Gln943–Gly953, and Ala1047–Ala1066. Basic residues predominate over residues Arg1164–Lys1175. The segment covering Ser1176–Pro1203 has biased composition (basic and acidic residues). Residues Asp1401–Ser1412 show a composition bias toward acidic residues.

As to quaternary structure, interacts with FHL2. As to expression, expressed in the heart and skeletal muscle (at protein level).

It localises to the cytoplasm. Its subcellular location is the myofibril. The protein resides in the sarcomere. It is found in the z line. Functionally, plays an important role in cardiomyocyte hypertrophy via activation of the calcineurin/NFAT signaling pathway. This chain is Cardiac-enriched FHL2-interacting protein, found in Mus musculus (Mouse).